A 365-amino-acid chain; its full sequence is G-protein coupled receptor 68 (365 aa).

The Extracellular portion of the chain corresponds to 1–12 (MGNITTENSSLS). Asn3 and Asn8 each carry an N-linked (GlcNAc...) asparagine glycan. Residues 13-49 (CPIDHTIHQTLAPVVYVTVLVVGFPANCLSLYFGYLQ) form a helical membrane-spanning segment. Intrachain disulfides connect Cys13-Cys258 and Cys94-Cys172. At 50-53 (IKAR) the chain is on the cytoplasmic side. Residues 54 to 84 (NELGVYLCNLTIADLFYICSLPFWLQYVLQH) traverse the membrane as a helical segment. The Extracellular segment spans residues 85-89 (DDWSH). The chain crosses the membrane as a helical span at residues 90-125 (GDLSCQVCGILLYENIYISVGFLCCISIDRYLAVAH). At 126–133 (PFRFHQFR) the chain is on the cytoplasmic side. The helical transmembrane segment at 134 to 160 (TLKAAVGVSVLIWAKELLTSIYFLNHK) threads the bilayer. Topologically, residues 161-176 (EVIEDEDQHRVCFEHY) are extracellular. The interval 161–176 (EVIEDEDQHRVCFEHY) is extracellular loop 2 (ECL2). Residues 177–214 (PIQAWQRSINYYRFLVGFLFPICLLLASYQGILRAVRR) form a helical membrane-spanning segment. The Cytoplasmic segment spans residues 215–218 (SHGT). The chain crosses the membrane as a helical span at residues 219 to 254 (QKSRKDQIQRLVLSTVVIFLACFLPYHVLLLVRSLW). The Extracellular segment spans residues 255–260 (ERNCEF). The chain crosses the membrane as a helical span at residues 261-289 (AKSIFNVYHFSLLLTSFNCVADPVLYCFV). Residues 290–365 (SETTHRDLAR…VGGPSTVGLA (76 aa)) are Cytoplasmic-facing.

The protein belongs to the G-protein coupled receptor 1 family. In terms of tissue distribution, expressed in the lung, testis, heart, brain, spleen, thymus, brown fat, small intestine, colon, peripheral blood leukocytes, macrophages, stomach, ovary and white fat but not in the liver, kidney, and skeletal muscle. Expression in the prostate is weak but detectable. Specifically expressed in endothelial cells of small-diameter resistance arteries.

The protein localises to the cell membrane. Its activity is regulated as follows. Activated by a network of residues that connects an extracellular-facing cavity to Glu-149, a conserved charged residue buried in the transmembrane core of the receptor. Protonation likely drives conformational changes in extracellular loop 2 (ECL2), which stabilizes movement of transmembrane 3 (TM3) and a series of rearrangements that connect the extracellular-facing cavity to Glu-149, a residue only conserved in proton-sensing G-protein coupled receptors. Activated in an allosteric manner by divalent metal ions at the extracellular surface following the order: Cd(2+) &gt; Co(2+) &gt; Ni(2+) &gt; Zn(2+) &gt; Fe(2+) &gt; Ca(2+) &gt; Mg(2+). Activated by ogerin (ZINC67740571), a selective GPR68 positive allosteric modulator. Inhibited by small molecule GPR68-I, decreasing inflammation in models of colitis. Proton-sensing G-protein coupled receptor activated by extracellular pH, which is required to monitor pH changes and generate adaptive reactions. The receptor is almost silent at pH 7.8 but fully activated at pH 6.8. Ligand binding causes a conformation change that triggers signaling via guanine nucleotide-binding proteins (G proteins) and modulates the activity of downstream effectors, such as phospholipase C. GPR68 is mainly coupled to G(q) G proteins and mediates production of diacylglycerol (DAG) and inositol 1,4,5-trisphosphate (IP3). Acts as a key mechanosensor of fluid shear stress and membrane stretch. Expressed in endothelial cells of small-diameter resistance arteries, where it mediates flow-induced dilation in response to shear stress. May represents an osteoblastic pH sensor regulating cell-mediated responses to acidosis in bone. Acts as a regulator of calcium-sensing receptor CASR in a seesaw manner: GPR68-mediated signaling inhibits CASR signaling in response to protons, while CASR inhibits GPR68 in presence of extracellular calcium. Also functions as a metastasis suppressor gene in prostate cancer. In Mus musculus (Mouse), this protein is G-protein coupled receptor 68.